The primary structure comprises 702 residues: Elongation factor G (702 aa).

The region spanning 8–290 is the tr-type G domain; the sequence is SRYRNIGISA…AVIEYLPSPT (283 aa). GTP is bound by residues 17–24, 88–92, and 142–145; these read AHIDAGKT, DTPGH, and NKMD.

The protein belongs to the TRAFAC class translation factor GTPase superfamily. Classic translation factor GTPase family. EF-G/EF-2 subfamily.

It is found in the cytoplasm. In terms of biological role, catalyzes the GTP-dependent ribosomal translocation step during translation elongation. During this step, the ribosome changes from the pre-translocational (PRE) to the post-translocational (POST) state as the newly formed A-site-bound peptidyl-tRNA and P-site-bound deacylated tRNA move to the P and E sites, respectively. Catalyzes the coordinated movement of the two tRNA molecules, the mRNA and conformational changes in the ribosome. The chain is Elongation factor G from Edwardsiella ictaluri (strain 93-146).